Consider the following 343-residue polypeptide: Biotin synthase (343 aa).

One can recognise a Radical SAM core domain in the interval 36-254; the sequence is NTIQISTLLS…IAVARIMMPK (219 aa). 3 residues coordinate [4Fe-4S] cluster: Cys51, Cys55, and Cys58. 4 residues coordinate [2Fe-2S] cluster: Cys95, Cys126, Cys186, and Arg258.

The protein belongs to the radical SAM superfamily. Biotin synthase family. Homodimer. [4Fe-4S] cluster is required as a cofactor. [2Fe-2S] cluster serves as cofactor.

The enzyme catalyses (4R,5S)-dethiobiotin + (sulfur carrier)-SH + 2 reduced [2Fe-2S]-[ferredoxin] + 2 S-adenosyl-L-methionine = (sulfur carrier)-H + biotin + 2 5'-deoxyadenosine + 2 L-methionine + 2 oxidized [2Fe-2S]-[ferredoxin]. The protein operates within cofactor biosynthesis; biotin biosynthesis; biotin from 7,8-diaminononanoate: step 2/2. Its function is as follows. Catalyzes the conversion of dethiobiotin (DTB) to biotin by the insertion of a sulfur atom into dethiobiotin via a radical-based mechanism. The sequence is that of Biotin synthase from Buchnera aphidicola subsp. Acyrthosiphon pisum (strain 5A).